The primary structure comprises 1241 residues: MHIRGTMSRVPTLASFEVRYKKSFGHKFRDFIALCGHYCSPIKKYIFPNFIAVHYFYTIVLTLITSILLYPVKNIRYIDALFLAAGAVTQGGLNTVDVNNLTLYQQIILYIICCISTPIAVHSCLAFVRLYWFERYFDGIRDSSRLNFKMRRTKTILERELTARTMTKSKTGGTQRVSRPGKSDKRDDFQEKLFNGEMVNRDEQDSVHSSHNSRDSNSNANTNSSNNNSINHNGSSGSLDDYVREDKADEVEKYHGNKSYSSVGSSSNTATDENISQKLKPSSLRFDESQNKRKRTGAPSEKFAKRRGSRDITPEDMYRSIMMLQGEHEGTAEDEGPPLVIGSPTDGTRNMDNGSESKSAPTMNESKIRIQDKGAKISLDQDSVLHSSNSSACTSDEDSLPTNFGGTTPSLSAKPRESSSGPIAFTEGENADRKQGPSIQFNITKPPRKASKSKRVSTMDDLNPRSIFPHQKKSSKGYIMKHLPKARRIRQQIKRRLSTGSIDKNSSSDALDRGLISGLNDDDDGNEGDNMEEYFADNESGDEDDRMQQSEPQSGSELKLKQQQQHQLQQNLHRMYKTKSFDDNRSKPVLMERSKTIDMAEARDLNELARTPDFQKMVYKNWKAHHRNKPNFKRRGWNGKMFEHGPYTSDSDHNYQDNGNNSNSIVHYAESILHRDNSHRNGSEDVSSDSNETTYPLNGNNDHSQNDANGYPTYNDEEEGYYGLHFDSDYNLDPHHALSSNASKNYLSWQPTIGRNSNFLGLTRAQKDELGGVEYRAIKLLCTILVVYYVGWHIVSFVMLVPWINLKKHYSDIVRSDGVSPTWWGFWTAMSAFNDLGLTLTPDSMMSFDKAVYPLIVMIWFIIIGNTGFPILLRCIIWIMFKLSPDLSQMRESLGFLLDHPRRCFTLLFPKAATWWLLLTLVGLNFTDWILFIILDFGSTVVKSLSKGYRVLVGLFQSVSTRTAGFSVVDLSQLHPSIQVSYMLMMYVSVLPLAISIRRTNVYEEQSLGLYGEMGGKPEDTDTEEDGDCDDEDDDNEEEESHEGGSSQRGKSKKETKKKKKRKENENPNEESTKSFIGAHLRRQLSFDLWFLFLGLFIICICERDKIKDIQRPNFNVFTILFEIVSAYGTVGLSLGYPNTNQSFSRQLTTLSKLIIIAMLIRGKNRGLPYSLDRAIILPSDRLEHIDHIEDLKLKRQARTDTDDPMTEHLKRSISDAKHRWDELKHKRSLSRSSKRSTKTN.

2 helical membrane-spanning segments follow: residues 49–70 (NFIA…ILLY) and 78–98 (IDAL…TVDV). Asparagine 100 carries an N-linked (GlcNAc...) asparagine glycan. A helical membrane pass occupies residues 107-127 (IILYIICCISTPIAVHSCLAF). Disordered regions lie at residues 162-241 (TART…SLDD), 253-316 (KYHG…TPED), and 329-570 (EGTA…QLQQ). A compositionally biased stretch (polar residues) spans 164 to 177 (RTMTKSKTGGTQRV). Composition is skewed to basic and acidic residues over residues 181-191 (GKSDKRDDFQE) and 199-214 (VNRD…HNSR). Residues 215 to 238 (DSNSNANTNSSNNNSINHNGSSGS) show a composition bias toward low complexity. N-linked (GlcNAc...) asparagine glycans are attached at residues asparagine 223, asparagine 227, asparagine 233, asparagine 257, asparagine 274, asparagine 353, and asparagine 364. 2 stretches are compositionally biased toward polar residues: residues 268–280 (NTAT…QKLK) and 345–365 (TDGT…TMNE). The segment covering 366-375 (SKIRIQDKGA) has biased composition (basic and acidic residues). The segment covering 380–411 (DQDSVLHSSNSSACTSDEDSLPTNFGGTTPSL) has biased composition (polar residues). Residues asparagine 389 and asparagine 442 are each glycosylated (N-linked (GlcNAc...) asparagine). 2 stretches are compositionally biased toward basic residues: residues 446-455 (PPRKASKSKR) and 482-497 (HLPK…KRRL). Polar residues predominate over residues 498 to 509 (STGSIDKNSSSD). N-linked (GlcNAc...) asparagine glycans are attached at residues asparagine 505 and asparagine 538. Acidic residues predominate over residues 520 to 545 (NDDDDGNEGDNMEEYFADNESGDEDD). A compositionally biased stretch (low complexity) spans 561–570 (KQQQQHQLQQ). Asparagine 584, asparagine 660, asparagine 681, asparagine 691, and asparagine 741 each carry an N-linked (GlcNAc...) asparagine glycan. Residues 677–714 (NSHRNGSEDVSSDSNETTYPLNGNNDHSQNDANGYPTY) are disordered. Polar residues predominate over residues 684-708 (EDVSSDSNETTYPLNGNNDHSQNDA). Transmembrane regions (helical) follow at residues 784–806 (ILVV…WINL), 819–840 (VSPT…GLTL), 844–864 (SMMS…FIII), 868–888 (GFPI…PDLS), and 904–924 (CFTL…LVGL). Asparagine 925 carries an N-linked (GlcNAc...) asparagine glycan. 2 helical membrane-spanning segments follow: residues 929 to 949 (WILF…SKGY) and 977 to 997 (SIQV…AISI). Residues 1011–1073 (YGEMGGKPED…ENENPNEEST (63 aa)) form a disordered region. Acidic residues predominate over residues 1021-1041 (TDTEEDGDCDDEDDDNEEEES). Over residues 1050 to 1062 (GKSKKETKKKKKR) the composition is skewed to basic residues. The next 2 helical transmembrane spans lie at 1084 to 1104 (QLSF…ICER) and 1117 to 1137 (VFTI…SLGY). An N-linked (GlcNAc...) asparagine glycan is attached at asparagine 1141. The tract at residues 1222–1241 (DELKHKRSLSRSSKRSTKTN) is disordered. The segment covering 1226–1241 (HKRSLSRSSKRSTKTN) has biased composition (basic residues).

The protein belongs to the TrkH potassium transport family.

The protein localises to the membrane. Its function is as follows. This protein is required for high-affinity potassium transport. The sequence is that of High-affinity potassium transport protein (TRK1) from Saccharomyces uvarum (Yeast).